The primary structure comprises 231 residues: Ribosyldihydronicotinamide dehydrogenase [quinone] (231 aa).

Residues histidine 12, 18–21 (FNGS), and 104–107 (LYWF) each bind FAD. Residue 127-129 (FDI) participates in substrate binding. FAD contacts are provided by residues 148 to 151 (TTGG) and tyrosine 156. The Zn(2+) site is built by histidine 174 and histidine 178. Aspartate 194 is a binding site for FAD. The residue at position 197 (serine 197) is a Phosphoserine. FAD is bound at residue arginine 201. Residue cysteine 223 coordinates Zn(2+).

This sequence belongs to the NAD(P)H dehydrogenase (quinone) family. As to quaternary structure, homodimer. It depends on Zn(2+) as a cofactor. FAD serves as cofactor.

The protein localises to the cytoplasm. It carries out the reaction 1-(beta-D-ribofuranosyl)-1,4-dihydronicotinamide + a quinone + H(+) = beta-nicotinamide D-riboside + a quinol. In terms of biological role, the enzyme apparently serves as a quinone reductase in connection with conjugation reactions of hydroquinones involved in detoxification pathways as well as in biosynthetic processes such as the vitamin K-dependent gamma-carboxylation of glutamate residues in prothrombin synthesis. The polypeptide is Ribosyldihydronicotinamide dehydrogenase [quinone] (Nqo2) (Mus musculus (Mouse)).